The following is a 572-amino-acid chain: Proline--tRNA ligase (572 aa).

This sequence belongs to the class-II aminoacyl-tRNA synthetase family. ProS type 1 subfamily. As to quaternary structure, homodimer.

It is found in the cytoplasm. It catalyses the reaction tRNA(Pro) + L-proline + ATP = L-prolyl-tRNA(Pro) + AMP + diphosphate. In terms of biological role, catalyzes the attachment of proline to tRNA(Pro) in a two-step reaction: proline is first activated by ATP to form Pro-AMP and then transferred to the acceptor end of tRNA(Pro). As ProRS can inadvertently accommodate and process non-cognate amino acids such as alanine and cysteine, to avoid such errors it has two additional distinct editing activities against alanine. One activity is designated as 'pretransfer' editing and involves the tRNA(Pro)-independent hydrolysis of activated Ala-AMP. The other activity is designated 'posttransfer' editing and involves deacylation of mischarged Ala-tRNA(Pro). The misacylated Cys-tRNA(Pro) is not edited by ProRS. In Edwardsiella ictaluri (strain 93-146), this protein is Proline--tRNA ligase.